We begin with the raw amino-acid sequence, 77 residues long: Large ribosomal subunit protein eL20 (77 aa).

Belongs to the eukaryotic ribosomal protein eL20 family. Part of the 50S ribosomal subunit. Binds 23S rRNA.

This is Large ribosomal subunit protein eL20 from Pyrococcus furiosus (strain ATCC 43587 / DSM 3638 / JCM 8422 / Vc1).